The following is a 202-amino-acid chain: NADH-quinone oxidoreductase subunit C (202 aa).

The protein belongs to the complex I 30 kDa subunit family. In terms of assembly, NDH-1 is composed of 14 different subunits. Subunits NuoB, C, D, E, F, and G constitute the peripheral sector of the complex.

It is found in the cell inner membrane. It carries out the reaction a quinone + NADH + 5 H(+)(in) = a quinol + NAD(+) + 4 H(+)(out). In terms of biological role, NDH-1 shuttles electrons from NADH, via FMN and iron-sulfur (Fe-S) centers, to quinones in the respiratory chain. The immediate electron acceptor for the enzyme in this species is believed to be ubiquinone. Couples the redox reaction to proton translocation (for every two electrons transferred, four hydrogen ions are translocated across the cytoplasmic membrane), and thus conserves the redox energy in a proton gradient. This Albidiferax ferrireducens (strain ATCC BAA-621 / DSM 15236 / T118) (Rhodoferax ferrireducens) protein is NADH-quinone oxidoreductase subunit C.